Here is a 192-residue protein sequence, read N- to C-terminus: Interleukin-18 (192 aa).

A propeptide spanning residues Met-1–Asp-35 is cleaved from the precursor.

Belongs to the IL-1 family. In terms of assembly, forms a ternary complex with ligand-binding receptor subunit IL18R1 and signaling receptor subunit IL18RAP at the plasma membrane. Mature IL18 first binds to IL18R1 forming a low affinity binary complex, which then interacts with IL18RAP to form a high affinity ternary complex that signals inside the cell. Interacts with cargo receptor TMED10; the interaction mediates the translocation from the cytoplasm into the ERGIC (endoplasmic reticulum-Golgi intermediate compartment) and thereby secretion. Post-translationally, the pro-IL-18 precursor is processed by CASP1 to yield its mature, active form. The pro-IL-18 precursor is however not processed by Casp4/Casp11 in rodents. The pro-IL-18 precursor features autoinhibitory interactions between the propeptide and the post-cleavage-site region, preventing recognition by the IL18R1 receptor. Processing by CASP1 induces conformational changes to generate critical receptor-binding sites. The mature form is then secreted and released in the extracellular milieu by passing through the gasdermin-D (GSDMD) pore. In contrast, cleavage by CASP3 inactivates IL18.

The protein resides in the cytoplasm. It is found in the secreted. In terms of biological role, pro-inflammatory cytokine primarily involved in epithelial barrier repair, polarized T-helper 1 (Th1) cell and natural killer (NK) cell immune responses. Upon binding to IL18R1 and IL18RAP, forms a signaling ternary complex which activates NF-kappa-B, triggering synthesis of inflammatory mediators. Synergizes with IL12/interleukin-12 to induce IFNG synthesis from T-helper 1 (Th1) cells and natural killer (NK) cells. Involved in transduction of inflammation downstream of pyroptosis: its mature form is specifically released in the extracellular milieu by passing through the gasdermin-D (GSDMD) pore. This Mus musculus (Mouse) protein is Interleukin-18.